A 175-amino-acid polypeptide reads, in one-letter code: Putative lipoprotein LppN (175 aa).

Residues methionine 1 to alanine 20 form the signal peptide. The N-palmitoyl cysteine moiety is linked to residue cysteine 21. Cysteine 21 carries the S-diacylglycerol cysteine lipid modification. The segment at alanine 31–glutamine 56 is disordered. Positions threonine 33–threonine 48 are enriched in low complexity.

It localises to the cell membrane. The polypeptide is Putative lipoprotein LppN (lppN) (Mycobacterium bovis (strain ATCC BAA-935 / AF2122/97)).